A 187-amino-acid polypeptide reads, in one-letter code: UPF0301 protein YPO0936/y3322/YP_3506 (187 aa).

Belongs to the UPF0301 (AlgH) family.

The sequence is that of UPF0301 protein YPO0936/y3322/YP_3506 from Yersinia pestis.